Here is a 386-residue protein sequence, read N- to C-terminus: Ovalbumin (386 aa).

The residue at position 2 (Gly2) is an N-acetylglycine. Position 69 is a phosphoserine (Ser69). A disulfide bridge links Cys74 with Cys121. An N-linked (GlcNAc...) asparagine glycan is attached at Asn293. Ser345 carries the phosphoserine modification.

This sequence belongs to the serpin family. Ov-serpin subfamily. The N-terminus is blocked.

Its subcellular location is the secreted. In terms of biological role, storage protein of egg white. Lacks protease inhibitory activity. This Dromaius novaehollandiae (Emu) protein is Ovalbumin (SERPINB14).